The primary structure comprises 393 residues: N-acyl-phosphatidylethanolamine-hydrolyzing phospholipase D (393 aa).

Residue M1 is modified to N-acetylmethionine. A compositionally biased stretch (polar residues) spans 1–16; the sequence is MDENESNQSLMTSSQY. A disordered region spans residues 1-40; the sequence is MDENESNQSLMTSSQYPKEAVRKRQNSARNSGGSDSSRFS. The Zn(2+) site is built by H185 and H187. Residue Y188 participates in an N-acyl-1,2-diacyl-sn-glycero-3-phosphoethanolamine binding. Positions 189, 190, and 253 each coordinate Zn(2+). Deoxycholate is bound by residues K256 and M260. D284 contributes to the Zn(2+) binding site. H321 contributes to the an N-acyl-1,2-diacyl-sn-glycero-3-phosphoethanolamine binding site. Residue H343 coordinates Zn(2+). A348 provides a ligand contact to deoxycholate.

This sequence belongs to the NAPE-PLD family. Homodimer. Bile acids promote the assembly of inactive monomers into an active dimer and enable catalysis. Zn(2+) serves as cofactor. In terms of tissue distribution, widely expressed. Highest expression in brain, kidney and testis (at protein level). Expressed in adipose tissue (at protein level).

It is found in the golgi apparatus membrane. The protein localises to the early endosome membrane. Its subcellular location is the nucleus envelope. It localises to the nucleus. The protein resides in the nucleoplasm. It catalyses the reaction an N-acyl-1,2-diacyl-sn-glycero-3-phosphoethanolamine + H2O = an N-acylethanolamine + a 1,2-diacyl-sn-glycero-3-phosphate + H(+). The catalysed reaction is N-butanoyl-1-hexadecanoyl-2-(9Z,12Z-octadecadienoyl)-sn-glycero-3-phosphoethanolamine + H2O = N-butanoyl ethanolamine + 1-hexadecanoyl-2-(9Z,12Z-octadecadienoyl)-sn-glycero-3-phosphate + H(+). It carries out the reaction N-hexanoyl-1-hexadecanoyl-2-(9Z,12Z-octadecadienoyl)-sn-glycero-3-phosphoethanolamine + H2O = N-hexanoyl ethanolamine + 1-hexadecanoyl-2-(9Z,12Z-octadecadienoyl)-sn-glycero-3-phosphate + H(+). The enzyme catalyses N-octanoyl-1-hexadecanoyl-2-(9Z,12Z-octadecadienoyl)-sn-glycero-3-phosphoethanolamine + H2O = N-octanoyl ethanolamine + 1-hexadecanoyl-2-(9Z,12Z-octadecadienoyl)-sn-glycero-3-phosphate + H(+). It catalyses the reaction N-decanoyl-1-hexadecanoyl-2-(9Z,12Z-octadecadienoyl)-sn-glycero-3-phosphoethanolamine + H2O = N-decanoyl ethanolamine + 1-hexadecanoyl-2-(9Z,12Z-octadecadienoyl)-sn-glycero-3-phosphate + H(+). The catalysed reaction is N-dodecanoyl-1,2-di-(9Z-octadecenoyl)-sn-glycero-3-phosphoethanolamine + H2O = N-dodecanoylethanolamine + 1,2-di-(9Z-octadecenoyl)-sn-glycero-3-phosphate + H(+). It carries out the reaction N-tetradecanoyl-1,2-di-(9Z-octadecenoyl)-sn-glycero-3-phosphoethanolamine + H2O = N-tetradecanoylethanolamine + 1,2-di-(9Z-octadecenoyl)-sn-glycero-3-phosphate + H(+). The enzyme catalyses N-hexadecanoyl-1,2-di-(9Z-octadecenoyl)-sn-glycero-3-phosphoethanolamine + H2O = N-hexadecanoylethanolamine + 1,2-di-(9Z-octadecenoyl)-sn-glycero-3-phosphate + H(+). It catalyses the reaction N,1-dihexadecanoyl-2-(9Z,12Z-octadecadienoyl)-sn-glycero-3-phosphoethanolamine + H2O = 1-hexadecanoyl-2-(9Z,12Z-octadecadienoyl)-sn-glycero-3-phosphate + N-hexadecanoylethanolamine + H(+). The catalysed reaction is N-octadecanoyl-1,2-di-(9Z-octadecenoyl)-sn-glycero-3-phosphoethanolamine + H2O = N-octadecanoyl ethanolamine + 1,2-di-(9Z-octadecenoyl)-sn-glycero-3-phosphate + H(+). It carries out the reaction N,1,2-tri-(9Z-octadecenoyl)-sn-glycero-3-phosphoethanolamine + H2O = N-(9Z-octadecenoyl) ethanolamine + 1,2-di-(9Z-octadecenoyl)-sn-glycero-3-phosphate + H(+). The enzyme catalyses N-(5Z,8Z,11Z,14Z-eicosatetraenoyl)-1,2-diacyl-sn-glycero-3-phosphoethanolamine + H2O = N-(5Z,8Z,11Z,14Z-eicosatetraenoyl)-ethanolamine + a 1,2-diacyl-sn-glycero-3-phosphate + H(+). It catalyses the reaction N-(5Z,8Z,11Z,14Z-eicosatetraenoyl)-1,2-di-(9Z-octadecenoyl)-sn-glycero-3-phosphoethanolamine + H2O = N-(5Z,8Z,11Z,14Z-eicosatetraenoyl)-ethanolamine + 1,2-di-(9Z-octadecenoyl)-sn-glycero-3-phosphate + H(+). The catalysed reaction is 1-O-(1Z-octadecenoyl)-2-(9Z-octadecenoyl)-sn-glycero-3-phospho-N-hexadecanoyl-ethanolamine + H2O = 1-O-(1Z-octadecenoyl)-2-(9Z-octadecenoyl)-sn-glycero-3-phosphate + N-hexadecanoylethanolamine + H(+). It carries out the reaction N,1-diacyl-sn-glycero-3-phosphoethanolamine + H2O = an N-acylethanolamine + a 1-acyl-sn-glycero-3-phosphate + H(+). The enzyme catalyses N,1-dihexadecanoyl-sn-glycero-3-phosphoethanolamine + H2O = N-hexadecanoylethanolamine + 1-hexadecanoyl-sn-glycero-3-phosphate + H(+). It catalyses the reaction N-(5Z,8Z,11Z,14Z-eicosatetraenoyl)-1-(9Z-octadecenoyl)-sn-glycero-3-phosphoethanolamine + H2O = N-(5Z,8Z,11Z,14Z-eicosatetraenoyl)-ethanolamine + 1-(9Z-octadecenoyl)-sn-glycero-3-phosphate + H(+). Its activity is regulated as follows. Activated by divalent cations. Activated by bile acids. In terms of biological role, D-type phospholipase that hydrolyzes N-acyl-phosphatidylethanolamines (NAPEs) to produce bioactive N-acylethanolamines/fatty acid ethanolamides (NAEs/FAEs) and phosphatidic acid. Cleaves the terminal phosphodiester bond of diacyl- and alkenylacyl-NAPEs, primarily playing a role in the generation of long-chain saturated and monounsaturated NAEs in the brain. May control NAPE homeostasis in dopaminergic neuron membranes and regulate neuron survival, partly through RAC1 activation. As a regulator of lipid metabolism in the adipose tissue, mediates the crosstalk between adipocytes, gut microbiota and immune cells to control body temperature and weight. In particular, regulates energy homeostasis by promoting cold-induced brown or beige adipocyte differentiation program to generate heat from fatty acids and glucose. Has limited D-type phospholipase activity toward N-acyl lyso-NAPEs. The sequence is that of N-acyl-phosphatidylethanolamine-hydrolyzing phospholipase D (NAPEPLD) from Pongo abelii (Sumatran orangutan).